Consider the following 83-residue polypeptide: Exodeoxyribonuclease 7 small subunit (83 aa).

The protein belongs to the XseB family. Heterooligomer composed of large and small subunits.

The protein resides in the cytoplasm. The catalysed reaction is Exonucleolytic cleavage in either 5'- to 3'- or 3'- to 5'-direction to yield nucleoside 5'-phosphates.. Functionally, bidirectionally degrades single-stranded DNA into large acid-insoluble oligonucleotides, which are then degraded further into small acid-soluble oligonucleotides. In Aeromonas salmonicida (strain A449), this protein is Exodeoxyribonuclease 7 small subunit.